The chain runs to 274 residues: Penicillin-insensitive murein endopeptidase (274 aa).

The first 19 residues, 1–19 (MNKTAIALLALLASSASLA), serve as a signal peptide directing secretion. 3 disulfide bridges follow: Cys-44-Cys-265, Cys-187-Cys-235, and Cys-216-Cys-223. 6 residues coordinate Zn(2+): His-110, His-113, Asp-120, Asp-147, His-150, and His-211. Residues 228 to 265 (LPPPGDGCGAELQSWFAPPKPGTTKPEKKTPPPLPPSC) form a disordered region.

The protein belongs to the peptidase M74 family. In terms of assembly, dimer. Requires Zn(2+) as cofactor.

It localises to the periplasm. Functionally, murein endopeptidase that cleaves the D-alanyl-meso-2,6-diamino-pimelyl amide bond that connects peptidoglycan strands. Likely plays a role in the removal of murein from the sacculus. In Shigella boydii serotype 18 (strain CDC 3083-94 / BS512), this protein is Penicillin-insensitive murein endopeptidase.